The chain runs to 49 residues: Small, acid-soluble spore protein O (49 aa).

Residues 1–49 (MVKRKANHVIPGMNDASAQGKGAGYNEELSNEPLTEAQKQNNKKRKKNQ) form a disordered region.

The protein belongs to the SspO family.

Its subcellular location is the spore core. This is Small, acid-soluble spore protein O from Anoxybacillus flavithermus (strain DSM 21510 / WK1).